We begin with the raw amino-acid sequence, 614 residues long: Pyrophosphate--fructose 6-phosphate 1-phosphotransferase subunit alpha 1 (614 aa).

This sequence belongs to the phosphofructokinase type A (PFKA) family. PPi-dependent PFK group II subfamily. Clade 'Long' sub-subfamily. In terms of assembly, tetramer of two alpha (regulatory) and two beta (catalytic) chains. In terms of tissue distribution, expressed in leaves, roots, and flowers (e.g. sepals, petals, stamen and gynoecium).

It is found in the cytoplasm. It participates in carbohydrate degradation; glycolysis; D-glyceraldehyde 3-phosphate and glycerone phosphate from D-glucose: step 3/4. Allosterically activated by fructose 2,6-bisphosphate. Functionally, regulatory subunit of pyrophosphate--fructose 6-phosphate 1-phosphotransferase. The polypeptide is Pyrophosphate--fructose 6-phosphate 1-phosphotransferase subunit alpha 1 (Arabidopsis thaliana (Mouse-ear cress)).